Here is a 269-residue protein sequence, read N- to C-terminus: Small ribosomal subunit protein uS2 (269 aa).

Belongs to the universal ribosomal protein uS2 family.

This chain is Small ribosomal subunit protein uS2 (rpsB), found in Synechocystis sp. (strain ATCC 27184 / PCC 6803 / Kazusa).